A 344-amino-acid polypeptide reads, in one-letter code: Ureide permease 3 (344 aa).

The Extracellular segment spans residues Met-1 to Thr-10. The chain crosses the membrane as a helical span at residues Ile-11–Thr-31. The Cytoplasmic segment spans residues Glu-32–Tyr-42. Residues Leu-43–Ile-63 traverse the membrane as a helical segment. Topologically, residues Ser-64–Asn-78 are extracellular. Residues Trp-79–Thr-99 traverse the membrane as a helical segment. Over Gln-100–Tyr-101 the chain is Cytoplasmic. The helical transmembrane segment at Ala-102–Ile-122 threads the bilayer. Residues Gly-123–Arg-136 are Extracellular-facing. Residues Ala-137 to Val-157 traverse the membrane as a helical segment. The Cytoplasmic portion of the chain corresponds to His-158–Arg-208. Ala-209–Ser-216 is a binding site for ATP. The helical transmembrane segment at Ala-209–Pro-229 threads the bilayer. The Extracellular segment spans residues Lys-230 to Thr-235. Residues Ala-236–Leu-256 traverse the membrane as a helical segment. The Cytoplasmic portion of the chain corresponds to Tyr-257 to Arg-278. A helical membrane pass occupies residues Gly-279 to Gly-299. Residues Gln-300–Ser-344 lie on the Extracellular side of the membrane.

The protein belongs to the plant ureide permease (TC 2.A.7.19) family.

The protein resides in the membrane. Its function is as follows. Proton-coupled transporter that transports a wide spectrum of oxo derivatives of heterocyclic nitrogen compounds. This Arabidopsis thaliana (Mouse-ear cress) protein is Ureide permease 3.